Here is a 355-residue protein sequence, read N- to C-terminus: Green-sensitive opsin (355 aa).

The Extracellular portion of the chain corresponds to 1 to 36 (MNGTEGINFYVPMSNKTGVVRSPFEYPQYYLAEPWK). Residues asparagine 2 and asparagine 15 are each glycosylated (N-linked (GlcNAc...) asparagine). Residues 37-61 (YRLVCCYIFFLISTGLPINLLTLLV) form a helical membrane-spanning segment. Residues 62–73 (TFKHKKLRQPLN) lie on the Cytoplasmic side of the membrane. Residues 74-99 (YILVNLAVADLFMACFGFTVTFYTAW) traverse the membrane as a helical segment. Residues 100-113 (NGYFVFGPVGCAVE) lie on the Extracellular side of the membrane. Cysteine 110 and cysteine 187 are oxidised to a cystine. Residues 114 to 133 (GFFATLGGQVALWSLVVLAI) traverse the membrane as a helical segment. The Cytoplasmic segment spans residues 134–152 (ERYIVVCKPMGNFRFSATH). A helical transmembrane segment spans residues 153-176 (AMMGIAFTWVMAFSCAAPPLFGWS). Residues 177-202 (RYMPEGMQCSCGPDYYTHNPDYHNES) are Extracellular-facing. The chain crosses the membrane as a helical span at residues 203–230 (YVLYMFVIHFIIPVVVIFFSYGRLICKV). At 231–252 (REAAAQQQESATTQKAEKEVTR) the chain is on the cytoplasmic side. The helical transmembrane segment at 253-276 (MVILMVLGFMLAWTPYAVVAFWIF) threads the bilayer. The Extracellular portion of the chain corresponds to 277-284 (TNKGADFT). A helical transmembrane segment spans residues 285–309 (ATLMAVPAFFSKSSSLYNPIIYVLM). Lysine 296 is modified (N6-(retinylidene)lysine). Residues 310 to 355 (NKQFRNCMITTICCGKNPFGDEDVSSTVSQSKTEVSSVSSSQVSPA) lie on the Cytoplasmic side of the membrane.

This sequence belongs to the G-protein coupled receptor 1 family. Opsin subfamily. Phosphorylated on some or all of the serine and threonine residues present in the C-terminal region. The color pigments are found in the cone photoreceptor cells.

Its subcellular location is the membrane. Functionally, visual pigments are the light-absorbing molecules that mediate vision. They consist of an apoprotein, opsin, covalently linked to cis-retinal. This is Green-sensitive opsin (PRA1) from Gallus gallus (Chicken).